Consider the following 209-residue polypeptide: Type III pantothenate kinase (209 aa).

5-12 lines the ATP pocket; the sequence is DIGNSNAN. Residues Tyr-68 and 72-75 each bind substrate; that span reads GIDR. Asp-74 serves as the catalytic Proton acceptor. Asp-89 contributes to the K(+) binding site. Ser-92 provides a ligand contact to ATP. Thr-144 provides a ligand contact to substrate.

Belongs to the type III pantothenate kinase family. As to quaternary structure, homodimer. It depends on NH4(+) as a cofactor. K(+) serves as cofactor.

It localises to the cytoplasm. It catalyses the reaction (R)-pantothenate + ATP = (R)-4'-phosphopantothenate + ADP + H(+). Its pathway is cofactor biosynthesis; coenzyme A biosynthesis; CoA from (R)-pantothenate: step 1/5. Its function is as follows. Catalyzes the phosphorylation of pantothenate (Pan), the first step in CoA biosynthesis. This is Type III pantothenate kinase from Campylobacter jejuni subsp. jejuni serotype O:2 (strain ATCC 700819 / NCTC 11168).